Here is a 274-residue protein sequence, read N- to C-terminus: Large ribosomal subunit protein uL2 (274 aa).

The segment at 223–274 is disordered; sequence VAMNPVDHPHGGGEGKTSGGRHPVSPWGVPTKGYKTRSNKRTDKFIVRRRAK.

The protein belongs to the universal ribosomal protein uL2 family. In terms of assembly, part of the 50S ribosomal subunit. Forms a bridge to the 30S subunit in the 70S ribosome.

Functionally, one of the primary rRNA binding proteins. Required for association of the 30S and 50S subunits to form the 70S ribosome, for tRNA binding and peptide bond formation. It has been suggested to have peptidyltransferase activity; this is somewhat controversial. Makes several contacts with the 16S rRNA in the 70S ribosome. The polypeptide is Large ribosomal subunit protein uL2 (Colwellia psychrerythraea (strain 34H / ATCC BAA-681) (Vibrio psychroerythus)).